The following is a 499-amino-acid chain: Thioredoxin reductase 1, cytoplasmic (499 aa).

FAD contacts are provided by residues 18–23 (IGGGSG), 42–43 (DF), 58–59 (TC), and 63–67 (GCIPK). Residues Cys-59 and Cys-64 are joined by a disulfide bond. Lys-68 is subject to N6-succinyllysine. Position 131 is a phosphotyrosine (Tyr-131). Residues 131–132 (YG) and Thr-161 each bind FAD. Residues Arg-166, 198–204 (ASYVALE), 221–222 (RS), Arg-226, 226–228 (RGF), 291–293 (VGR), and Lys-315 contribute to the NADP(+) site. An FAD-binding site is contributed by Tyr-200. FAD-binding positions include Asp-334, 341-343 (ELT), and His-472. Position 341 (Glu-341) interacts with NADP(+). His-472 acts as the Proton acceptor in catalysis. A cross-link (cysteinyl-selenocysteine (Cys-Sec)) is located at residues 497-498 (CU). Residue Sec-498 is a non-standard amino acid, selenocysteine.

Belongs to the class-I pyridine nucleotide-disulfide oxidoreductase family. Homodimer. It depends on FAD as a cofactor. In terms of processing, ISGylated.

It localises to the cytoplasm. The enzyme catalyses [thioredoxin]-dithiol + NADP(+) = [thioredoxin]-disulfide + NADPH + H(+). It catalyses the reaction H2O2 + NADPH + H(+) = NADP(+) + 2 H2O. In terms of biological role, reduces disulfideprotein thioredoxin (Trx) to its dithiol-containing form. Homodimeric flavoprotein involved in the regulation of cellular redox reactions, growth and differentiation. Contains a selenocysteine residue at the C-terminal active site that is essential for catalysis. Also has reductase activity on hydrogen peroxide (H2O2). The polypeptide is Thioredoxin reductase 1, cytoplasmic (Rattus norvegicus (Rat)).